A 124-amino-acid chain; its full sequence is Acidic phospholipase A2 BA2 (124 aa).

7 cysteine pairs are disulfide-bonded: Cys-26–Cys-116, Cys-28–Cys-44, Cys-43–Cys-95, Cys-49–Cys-124, Cys-50–Cys-88, Cys-57–Cys-81, and Cys-75–Cys-86. Ca(2+)-binding residues include Tyr-27, Gly-29, and Gly-31. His-47 is a catalytic residue. Asp-48 provides a ligand contact to Ca(2+). Residue Asp-89 is part of the active site.

It belongs to the phospholipase A2 family. Group II subfamily. D49 sub-subfamily. The cofactor is Ca(2+). Expressed by the venom gland.

The protein resides in the secreted. It catalyses the reaction a 1,2-diacyl-sn-glycero-3-phosphocholine + H2O = a 1-acyl-sn-glycero-3-phosphocholine + a fatty acid + H(+). In terms of biological role, PLA2 catalyzes the calcium-dependent hydrolysis of the 2-acyl groups in 3-sn-phosphoglycerides. In Gloydius halys (Chinese water mocassin), this protein is Acidic phospholipase A2 BA2.